We begin with the raw amino-acid sequence, 156 residues long: ATP synthase subunit b (156 aa).

Residues 5–25 form a helical membrane-spanning segment; the sequence is LTLIVQMLVFAAFVLFTMKLV.

Belongs to the ATPase B chain family. F-type ATPases have 2 components, F(1) - the catalytic core - and F(0) - the membrane proton channel. F(1) has five subunits: alpha(3), beta(3), gamma(1), delta(1), epsilon(1). F(0) has three main subunits: a(1), b(2) and c(10-14). The alpha and beta chains form an alternating ring which encloses part of the gamma chain. F(1) is attached to F(0) by a central stalk formed by the gamma and epsilon chains, while a peripheral stalk is formed by the delta and b chains.

It is found in the cell inner membrane. Functionally, f(1)F(0) ATP synthase produces ATP from ADP in the presence of a proton or sodium gradient. F-type ATPases consist of two structural domains, F(1) containing the extramembraneous catalytic core and F(0) containing the membrane proton channel, linked together by a central stalk and a peripheral stalk. During catalysis, ATP synthesis in the catalytic domain of F(1) is coupled via a rotary mechanism of the central stalk subunits to proton translocation. Its function is as follows. Component of the F(0) channel, it forms part of the peripheral stalk, linking F(1) to F(0). The sequence is that of ATP synthase subunit b from Legionella pneumophila (strain Paris).